A 428-amino-acid polypeptide reads, in one-letter code: Glutamyl-tRNA reductase (428 aa).

Substrate is bound by residues 49 to 52 (TCNR), Ser-109, 114 to 116 (EGQ), and Gln-120. Cys-50 serves as the catalytic Nucleophile. 189-194 (GAGKMS) is an NADP(+) binding site.

Belongs to the glutamyl-tRNA reductase family. As to quaternary structure, homodimer.

It catalyses the reaction (S)-4-amino-5-oxopentanoate + tRNA(Glu) + NADP(+) = L-glutamyl-tRNA(Glu) + NADPH + H(+). It participates in porphyrin-containing compound metabolism; protoporphyrin-IX biosynthesis; 5-aminolevulinate from L-glutamyl-tRNA(Glu): step 1/2. It functions in the pathway porphyrin-containing compound metabolism; chlorophyll biosynthesis. Functionally, catalyzes the NADPH-dependent reduction of glutamyl-tRNA(Glu) to glutamate 1-semialdehyde (GSA). The chain is Glutamyl-tRNA reductase from Trichormus variabilis (strain ATCC 29413 / PCC 7937) (Anabaena variabilis).